The chain runs to 292 residues: Arabinose operon regulatory protein (292 aa).

Alpha-L-arabinopyanose contacts are provided by P8, T24, R38, Y82, and H93. In terms of domain architecture, HTH araC/xylS-type spans 180 to 279 (REACQYISDH…GASPSEFRAG (100 aa)). 2 consecutive DNA-binding regions (H-T-H motif) follow at residues 198-219 (ASVA…RQQL) and 246-269 (IATV…KKCT).

As to quaternary structure, homodimer.

The protein localises to the cytoplasm. With respect to regulation, arabinose converts the repressor form of AraC to the activator form to regulate the araBAD promoter. In the absence of arabinose, AraC binds to the araO2 and araI1 half-sites in the promoter region of the araBAD operon, leading to the formation of a DNA loop that blocks access of RNA polymerase to the promoter. In the presence of arabinose and the cyclic AMP receptor protein (CRP), it binds to the adjacent half-sites araI1 and araI2, leading to the binding of RNA polymerase to the promoter region and transcription of the araBAD operon. AraI1 acts as a switch mechanism allowing both the repressor and the activator forms of AraC protein to regulate the araBAD promoter. Inhibited by D-fucose, which binds competitively to the same site on the protein. In terms of biological role, transcription factor that regulates the expression of several genes involved in the transport and metabolism of L-arabinose. Functions both as a positive and a negative regulator. In the presence of arabinose, activates the expression of the araBAD, araE, araFGH and araJ promoters. In the absence of arabinose, negatively regulates the araBAD operon. Represses its own transcription. Acts by binding directly to DNA. This chain is Arabinose operon regulatory protein, found in Escherichia coli (strain K12).